The sequence spans 397 residues: Ribosomal RNA large subunit methyltransferase I (397 aa).

A PUA domain is found at 2–80; it reads AIRIKLKPGR…KEEAIDADFF (79 aa).

The protein belongs to the methyltransferase superfamily. RlmI family.

The protein localises to the cytoplasm. The enzyme catalyses cytidine(1962) in 23S rRNA + S-adenosyl-L-methionine = 5-methylcytidine(1962) in 23S rRNA + S-adenosyl-L-homocysteine + H(+). Functionally, specifically methylates the cytosine at position 1962 (m5C1962) of 23S rRNA. The polypeptide is Ribosomal RNA large subunit methyltransferase I (Shewanella denitrificans (strain OS217 / ATCC BAA-1090 / DSM 15013)).